A 341-amino-acid chain; its full sequence is MKSIGITAIGMYVPERVVHNHEFESRMGIEDGWIESRSGIRERRFSAPGEFASHIGAKAVQDMLARDPDALKDVDLVIYATCTPDAMFPSTAALVAGQVGLTGVGAYDLSTACSGFVYALSMARGMILGGSAKNVLVLGGEVLSKALDQDDRDTAILFGDGCGCAVVGEVPAGYGFQDFVLGADSAGGPALYISNLADQFPDGQIMRGVPTMNGREVFKFAVRVLGDSGTQALQKSGLSNADVDWLIPHQANIRIIEAATQRFGIPMEKTVINLDRYGNTSAGTVPLALYEAVNDGRIQGGQQLLMVVFGGGLSWAACTMKWWGGRPSLHAQVAQPAEVPA.

Residues C113 and H249 contribute to the active site. The segment at 250–254 (QANIR) is ACP-binding. The active site involves N279.

It belongs to the thiolase-like superfamily. FabH family. In terms of assembly, homodimer.

The protein resides in the cytoplasm. It carries out the reaction malonyl-[ACP] + acetyl-CoA + H(+) = 3-oxobutanoyl-[ACP] + CO2 + CoA. Its pathway is lipid metabolism; fatty acid biosynthesis. Its function is as follows. Catalyzes the condensation reaction of fatty acid synthesis by the addition to an acyl acceptor of two carbons from malonyl-ACP. Catalyzes the first condensation reaction which initiates fatty acid synthesis and may therefore play a role in governing the total rate of fatty acid production. Possesses both acetoacetyl-ACP synthase and acetyl transacylase activities. Its substrate specificity determines the biosynthesis of branched-chain and/or straight-chain of fatty acids. The sequence is that of Beta-ketoacyl-[acyl-carrier-protein] synthase III 1 from Deinococcus radiodurans (strain ATCC 13939 / DSM 20539 / JCM 16871 / CCUG 27074 / LMG 4051 / NBRC 15346 / NCIMB 9279 / VKM B-1422 / R1).